The primary structure comprises 652 residues: O-fucosyltransferase 15 (652 aa).

The helical; Signal-anchor for type II membrane protein transmembrane segment at 91–111 (TAAFVIVLVGFFIFVNWFMLS) threads the bilayer. N-linked (GlcNAc...) asparagine glycosylation is found at N139, N169, and N251. A substrate-binding site is contributed by 426–428 (HLR). N464, N546, and N607 each carry an N-linked (GlcNAc...) asparagine glycan.

This sequence belongs to the glycosyltransferase GT106 family.

The protein localises to the membrane. The protein operates within glycan metabolism. This is O-fucosyltransferase 15 from Arabidopsis thaliana (Mouse-ear cress).